The sequence spans 161 residues: Ribonuclease H (161 aa).

An RNase H type-1 domain is found at 1–142; it reads MLKLVKMFSD…CDKIARQSAQ (142 aa). Mg(2+)-binding residues include D10, E48, D70, and D134.

It belongs to the RNase H family. In terms of assembly, monomer. It depends on Mg(2+) as a cofactor.

The protein resides in the cytoplasm. The enzyme catalyses Endonucleolytic cleavage to 5'-phosphomonoester.. Its function is as follows. Endonuclease that specifically degrades the RNA of RNA-DNA hybrids. In Buchnera aphidicola subsp. Schizaphis graminum (strain Sg), this protein is Ribonuclease H (rnhA).